Reading from the N-terminus, the 356-residue chain is MQTNSSNSVPSAISDKYTQNHMPIAIWLLICCALVFAMIVVGGVTRLTGSGLSIVEWKPIVGTIPPIGQEDWEVLLEKYRQIPQYEQVNKGMTLDEFKGIFWWEYFHRLLGRLIGLVYFIPFVYFMVRKRIDRLLGLKLLGIFALGALQGLMGWYMVMSGLADNVYVSQYRLTAHLGLAFVIYAAMFWVATGLISPLNTHLSDPVSVHKLKKFAWMLTGLIFVMVLSGGLVAGIHAGRAYNTFPLMDGFLIPPAMFVLEPWYRNFFDNITTVQFDHRLIAWLLIFSIPWFWFKAKQLSLSYSGRLACHLLLLMLLIQAGLGITTLLLSVPLTFATAHQAGAVLLFTAALWVCRKLS.

A run of 5 helical transmembrane segments spans residues 24–44, 106–126, 139–159, 174–194, and 214–234; these read IAIWLLICCALVFAMIVVGGV, FHRLLGRLIGLVYFIPFVYFM, LLGIFALGALQGLMGWYMVMS, AHLGLAFVIYAAMFWVATGLI, and AWMLTGLIFVMVLSGGLVAGI. Heme is bound at residue His-276. A run of 3 helical transmembrane segments spans residues 278 to 298, 309 to 329, and 331 to 351; these read LIAWLLIFSIPWFWFKAKQLS, LLLLMLLIQAGLGITTLLLSV, and LTFATAHQAGAVLLFTAALWV. Heme is bound at residue His-337.

This sequence belongs to the COX15/CtaA family. Type 2 subfamily. In terms of assembly, interacts with CtaB. Heme b is required as a cofactor.

It is found in the cell membrane. The catalysed reaction is Fe(II)-heme o + 2 A + H2O = Fe(II)-heme a + 2 AH2. It participates in porphyrin-containing compound metabolism; heme A biosynthesis; heme A from heme O: step 1/1. Its function is as follows. Catalyzes the conversion of heme O to heme A by two successive hydroxylations of the methyl group at C8. The first hydroxylation forms heme I, the second hydroxylation results in an unstable dihydroxymethyl group, which spontaneously dehydrates, resulting in the formyl group of heme A. This Nitrosomonas eutropha (strain DSM 101675 / C91 / Nm57) protein is Heme A synthase.